A 77-amino-acid chain; its full sequence is Apelin (77 aa).

Positions 1-22 are cleaved as a signal peptide; it reads MNLRLCVQALLLLWLSLTAVCG. A propeptide spanning residues 23 to 41 is cleaved from the precursor; it reads VPLMLPPDGTGLEEGSMRY. The interval 46–77 is disordered; it reads RTSRTGPGAWQGGRRKFRRQRPRLSHKGPMPF. Basic residues predominate over residues 58–71; the sequence is GRRKFRRQRPRLSH.

The protein belongs to the apelin family. Several active peptides may be produced by proteolytic processing of the peptide precursor. In terms of tissue distribution, expressed in extraembryonic visceral endoderm and in the primitive streak at 6.5 and 7.5 dpc. Expressed in the anterior visceral yolk sac at 8.25 dpc. Expressed weakly in the embryonic heart at 11.5 dpc. Expressed in the adult heart. Expressed in endothelial cells and cardiomyocytes and weakly expressed in fibroblasts.

Its subcellular location is the secreted. The protein resides in the extracellular space. Functionally, peptide hormone that functions as endogenous ligand for the G-protein-coupled apelin receptor (APLNR/APJ). Functions as a balanced agonist activating both G(i) protein pathway and beta-arrestin pathway of APLNR. Downstream G proteins activation, apelin can inhibit cAMP production and activate key intracellular effectors such as ERKs. On the other hand, APLNR activation induces beta-arrestin recruitment to the membrane leading to desensitization and internalization of the receptor. Apelin also blunts mechanical stretch-induced hypertrophic induction from APLNR. Apelin-36 dissociates more hardly than (pyroglu)apelin-13 from APLNR. Involved in the regulation of cardiac precursor cell movements during gastrulation and heart morphogenesis. Has an inhibitory effect on cytokine production in response to T-cell receptor/CD3 cross-linking; the oral intake of apelin in the colostrum and the milk might therefore modulate immune responses in neonates. Plays a role in early coronary blood vessels formation. Mediates myocardial contractility in an ERK1/2-dependent manner. May also have a role in the central control of body fluid homeostasis by influencing vasopressin release and drinking behavior. This is Apelin from Mus musculus (Mouse).